The following is a 203-amino-acid chain: Suppressor/enhancer of lin-12 protein 9 (203 aa).

Positions Met-1 to Ser-18 are cleaved as a signal peptide. Residues Tyr-19–Arg-170 lie on the Lumenal side of the membrane. Positions Glu-28 to Ile-110 constitute a GOLD domain. Residues Val-171–Phe-191 traverse the membrane as a helical segment. Residues Tyr-192 to Val-203 lie on the Cytoplasmic side of the membrane.

This sequence belongs to the EMP24/GP25L family.

It localises to the cytoplasmic vesicle membrane. The protein localises to the cytoplasmic vesicle. Its subcellular location is the COPI-coated vesicle membrane. The protein resides in the golgi apparatus membrane. Its function is as follows. May have a role in the negative regulation of lin-12 and glp-1 transport to the cell surface. May also have a role in a quality control mechanism for endoplasmic reticulum-Golgi transport; the budding of coatomer-coated and other species of coated vesicles, could bind cargo molecules to collect them into budding vesicles. Involved in regulating the expression of proteasomal subunits such as rpt-3 in order to confer resistance to proteasomal dysfunction. This chain is Suppressor/enhancer of lin-12 protein 9 (sel-9), found in Caenorhabditis elegans.